Reading from the N-terminus, the 637-residue chain is 1-deoxy-D-xylulose-5-phosphate synthase (637 aa).

Thiamine diphosphate contacts are provided by residues histidine 71 and 112–114 (SHA). Aspartate 144 lines the Mg(2+) pocket. Thiamine diphosphate is bound by residues 145–146 (GA), asparagine 173, tyrosine 284, and glutamate 365. A Mg(2+)-binding site is contributed by asparagine 173.

Belongs to the transketolase family. DXPS subfamily. Homodimer. Requires Mg(2+) as cofactor. It depends on thiamine diphosphate as a cofactor.

The enzyme catalyses D-glyceraldehyde 3-phosphate + pyruvate + H(+) = 1-deoxy-D-xylulose 5-phosphate + CO2. It functions in the pathway metabolic intermediate biosynthesis; 1-deoxy-D-xylulose 5-phosphate biosynthesis; 1-deoxy-D-xylulose 5-phosphate from D-glyceraldehyde 3-phosphate and pyruvate: step 1/1. Catalyzes the acyloin condensation reaction between C atoms 2 and 3 of pyruvate and glyceraldehyde 3-phosphate to yield 1-deoxy-D-xylulose-5-phosphate (DXP). The protein is 1-deoxy-D-xylulose-5-phosphate synthase of Mycolicibacterium vanbaalenii (strain DSM 7251 / JCM 13017 / BCRC 16820 / KCTC 9966 / NRRL B-24157 / PYR-1) (Mycobacterium vanbaalenii).